The primary structure comprises 514 residues: L-Threonine dehydratase biosynthetic IlvA (514 aa).

Lysine 62 is subject to N6-(pyridoxal phosphate)lysine. Pyridoxal 5'-phosphate contacts are provided by residues asparagine 89, 188-192, and serine 315; that span reads GGGGL. ACT-like domains follow at residues 339–411 and 434–504; these read ALLA…DLSD and RLYS…DESN.

The protein belongs to the serine/threonine dehydratase family. Homotetramer. Requires pyridoxal 5'-phosphate as cofactor.

The catalysed reaction is L-threonine = 2-oxobutanoate + NH4(+). It functions in the pathway amino-acid biosynthesis; L-isoleucine biosynthesis; 2-oxobutanoate from L-threonine: step 1/1. Isoleucine allosterically inhibits whereas valine allosterically activates this enzyme. Functionally, catalyzes the anaerobic formation of alpha-ketobutyrate and ammonia from threonine in a two-step reaction. The first step involved a dehydration of threonine and a production of enamine intermediates (aminocrotonate), which tautomerizes to its imine form (iminobutyrate). Both intermediates are unstable and short-lived. The second step is the nonenzymatic hydrolysis of the enamine/imine intermediates to form 2-ketobutyrate and free ammonia. In the low water environment of the cell, the second step is accelerated by RidA. The protein is L-Threonine dehydratase biosynthetic IlvA (ilvA) of Salmonella typhimurium (strain LT2 / SGSC1412 / ATCC 700720).